A 180-amino-acid polypeptide reads, in one-letter code: Large ribosomal subunit protein uL6 (180 aa).

The protein belongs to the universal ribosomal protein uL6 family. Part of the 50S ribosomal subunit.

This protein binds to the 23S rRNA, and is important in its secondary structure. It is located near the subunit interface in the base of the L7/L12 stalk, and near the tRNA binding site of the peptidyltransferase center. The polypeptide is Large ribosomal subunit protein uL6 (Clostridium tetani (strain Massachusetts / E88)).